A 237-amino-acid chain; its full sequence is Putative N-acetylmuramoyl-L-alanine amidase (237 aa).

Residues 7–225 (ILIDAGHGGY…IANSIYLGLK (219 aa)) enclose the MurNAc-LAA domain.

The protein belongs to the N-acetylmuramoyl-L-alanine amidase 3 family.

It localises to the secreted. The enzyme catalyses Hydrolyzes the link between N-acetylmuramoyl residues and L-amino acid residues in certain cell-wall glycopeptides.. Cell-wall hydrolase involved in septum cleavage during cell division. The protein is Putative N-acetylmuramoyl-L-alanine amidase (amiB) of Buchnera aphidicola subsp. Acyrthosiphon pisum (strain APS) (Acyrthosiphon pisum symbiotic bacterium).